The chain runs to 1326 residues: MINKILIKLITIIIFCFSFLFAEEDLIRTPPGYYNLTRHKRYPHITEYQSSQDTDLYYPDVCRNALRNDIIPGVDEFFPFLFPGFNSDGPNSIYIQKNSSLLFKSESLGTTYNFVAVCVEGSFTVKGSMFFTINSLIILPGGRFESEAGIEFYDENDPLHIYNNPDFPKDPFGFFPGILVLGGTISVVAKESLVYRADRISNSSIEISPPFSPMNKINQTIRIFTELYPLGFYCSFSSDLERKILSLLDCLPISENDKIIRVLIEVDRDQNVSPTNILKKGKTTKGSIYITGDSNVYFKNMFFKNLGFTTNEPYNDTKLIFSPNDPNQVTDIIMGTNQRFRSSLYIEFSKNVTIDGCAFFEDNLTRSPLVLFDSNVIISNSLISSKSGSNIIAQYGTESIQSSNNSYILVKIDTASLDVDQNNNNNNNNNNNNNNNNNNNNNNNNNNNNNNNNNNNNNNNMDYGNQGNGIYSISPNINSNGDSFFGQQYAFNYYFISKNSVNSNQDNSSLLNSKPIELIIIDSSFNPTNSNGSLNKYLLNINSDGNKTISTYLVCNSIIEYYSGWLMDNLNSNQQISFEGNLFQNGCNKVDGNCTISQNSKYSTDLPKVANQTKFDEIVQLDKLFSNGITSINPNEKVIISTKINSKIHYYQIQLFFTHLPIDDQPTPLSIYIENQPVFLLEPIKSTFPTFNNFTFKFENKNSLDKINIAFTTRGDIYLTSMATYSSIVVEPPTETPTETPTETPTETPTDTPTQTPTQTPILTSKPITQISVDRNENLELKIALPICLSLALLIGIIIMICIFKKVQSNSKLKKDDDENEMATIKEGNKSIIVSQPPTVIEEKPQDNSKPDDQKLIERDQQINNPILKIREYPSLKDIELSNEETKSPQYGSLNSFSTLQFSRQYDYGSEEFPFQFNKQVLEFNLNGRKCMNDEVINDSLMIHNKSEITYLVNIIFPQNIETGCVSILNVEIFNESFELLPHCTTEVKFSLTLTCTTKFLENFAVLVEAQGSKCHTFLSVHVESETSLKLDYKEIKTEQLIASYLPSKVYVFKGYYRDLAVAVKKFAISDNSKSFEKIKNEVQILSKVNNINVVRYIGSAQNISHVCIVTEYAKEGSLGSLIHDSKIKLSFIQKVKFMLDAAKGFTFLHASEIVHGDIKPDNLLVFSKEISGVCVKICDFGNSEELGEKESKSKPDSTMNYLPNEVFDGEGYQKSADVYAFGVSLYEVMVEKIPFHEICYNDIPNRVQDGFRPTADLDTIDDDIRKIIECCWIKEKSKRPSFSEISLHLEIKFSKLLHQMNESEESTSNHNTNSKTKEDKDLDEN.

The signal sequence occupies residues 1-22 (MINKILIKLITIIIFCFSFLFA). The Extracellular portion of the chain corresponds to 23-782 (EEDLIRTPPG…VDRNENLELK (760 aa)). 2 disordered regions span residues 419–467 (VDQN…GNQG) and 731–762 (EPPTETPTETPTETPTETPTDTPTQTPTQTPI). Low complexity-rich tracts occupy residues 422 to 460 (NNNNNNNNNNNNNNNNNNNNNNNNNNNNNNNNNNNNNNN) and 731 to 761 (EPPTETPTETPTETPTETPTDTPTQTPTQTP). The helical transmembrane segment at 783 to 803 (IALPICLSLALLIGIIIMICI) threads the bilayer. Residues 804–1326 (FKKVQSNSKL…TKEDKDLDEN (523 aa)) lie on the Cytoplasmic side of the membrane. Positions 833-858 (IVSQPPTVIEEKPQDNSKPDDQKLIE) are disordered. Basic and acidic residues predominate over residues 841–858 (IEEKPQDNSKPDDQKLIE). The 257-residue stretch at 1036–1292 (IKTEQLIASY…FSEISLHLEI (257 aa)) folds into the Protein kinase domain. ATP-binding positions include 1042–1050 (IASYLPSKV) and Lys-1065. The Proton acceptor role is filled by Asp-1158. The interval 1301-1326 (MNESEESTSNHNTNSKTKEDKDLDEN) is disordered. Basic and acidic residues predominate over residues 1316–1326 (KTKEDKDLDEN).

It in the N-terminal section; belongs to the GDT family. In the C-terminal section; belongs to the protein kinase superfamily. TKL Ser/Thr protein kinase family.

It is found in the membrane. It carries out the reaction L-seryl-[protein] + ATP = O-phospho-L-seryl-[protein] + ADP + H(+). The catalysed reaction is L-threonyl-[protein] + ATP = O-phospho-L-threonyl-[protein] + ADP + H(+). The sequence is that of Probable serine/threonine-protein kinase gdt8 (gdt8) from Dictyostelium discoideum (Social amoeba).